Reading from the N-terminus, the 492-residue chain is N-succinylglutamate 5-semialdehyde dehydrogenase (492 aa).

220-225 (GSANTG) contributes to the NAD(+) binding site. Active-site residues include Glu243 and Cys277.

This sequence belongs to the aldehyde dehydrogenase family. AstD subfamily.

It carries out the reaction N-succinyl-L-glutamate 5-semialdehyde + NAD(+) + H2O = N-succinyl-L-glutamate + NADH + 2 H(+). It functions in the pathway amino-acid degradation; L-arginine degradation via AST pathway; L-glutamate and succinate from L-arginine: step 4/5. Functionally, catalyzes the NAD-dependent reduction of succinylglutamate semialdehyde into succinylglutamate. The polypeptide is N-succinylglutamate 5-semialdehyde dehydrogenase (Escherichia coli (strain UTI89 / UPEC)).